Consider the following 660-residue polypeptide: Cullin-associated NEDD8-dissociated protein 1 homolog (660 aa).

A Glycyl lysine isopeptide (Lys-Gly) (interchain with G-Cter in NEDD8) cross-link involves residue Lys16. The interval Thr339–Glu364 is disordered. Acidic residues predominate over residues Ile351–Pro363.

As to quaternary structure, interacts with unneddylated cullin CDC53. Neddylated at Lys-16.

In terms of biological role, assembly factor of SCF (SKP1-CUL1-F-box protein) E3 ubiquitin ligase complexes that promotes the exchange of the substrate-recognition F-box subunit in SCF complexes, thereby playing a key role in the cellular repertoire of SCF complexes. Acts as a F-box protein exchange factor. Involved in the aging process. Longevity-assurance protein. This is Cullin-associated NEDD8-dissociated protein 1 homolog (LAG2) from Saccharomyces cerevisiae (strain ATCC 204508 / S288c) (Baker's yeast).